The primary structure comprises 301 residues: uncharacterized protein (301 aa).

Residues 1-22 (MPGRFTVALVIALGGTCGVADA) form the signal peptide. A GP-PDE domain is found at 31–300 (PMIVAHRAGT…DSPLAAQQWR (270 aa)).

This is an uncharacterized protein from Mycobacterium tuberculosis (strain ATCC 25618 / H37Rv).